The sequence spans 233 residues: Ribonuclease 3 (233 aa).

The RNase III domain occupies 6-135 (QDYLAKEFNI…FIGALYLDQG (130 aa)). Glu48 is a Mg(2+) binding site. The active site involves Asp52. Mg(2+) contacts are provided by Asp121 and Glu124. Residue Glu124 is part of the active site. The region spanning 161–230 (DAKTSLQEFL…AQQALDNMRN (70 aa)) is the DRBM domain. The tract at residues 205–233 (IGEGKGSSKKHAEMQAAQQALDNMRNKNK) is disordered.

Belongs to the ribonuclease III family. As to quaternary structure, homodimer. The cofactor is Mg(2+).

It is found in the cytoplasm. It carries out the reaction Endonucleolytic cleavage to 5'-phosphomonoester.. In terms of biological role, digests double-stranded RNA. Involved in the processing of primary rRNA transcript to yield the immediate precursors to the large and small rRNAs (23S and 16S). Processes some mRNAs, and tRNAs when they are encoded in the rRNA operon. Processes pre-crRNA and tracrRNA of type II CRISPR loci if present in the organism. This chain is Ribonuclease 3, found in Limosilactobacillus reuteri (strain DSM 20016) (Lactobacillus reuteri).